Here is a 210-residue protein sequence, read N- to C-terminus: Endo-1,4-beta-xylanase A (210 aa).

Positions 1 to 19 (MKLKKKMLTLLLTASMSFG) are cleaved as a signal peptide. Positions 20-210 (LFGATSSAAT…SSGRSNVTVW (191 aa)) constitute a GH11 domain. E104 serves as the catalytic Nucleophile. Residue E197 is the Proton donor of the active site.

The protein belongs to the glycosyl hydrolase 11 (cellulase G) family.

It catalyses the reaction Endohydrolysis of (1-&gt;4)-beta-D-xylosidic linkages in xylans.. It participates in glycan degradation; xylan degradation. This Geobacillus stearothermophilus (Bacillus stearothermophilus) protein is Endo-1,4-beta-xylanase A (xynA).